A 359-amino-acid polypeptide reads, in one-letter code: Probable RNA methyltransferase RPD_2859 (359 aa).

Residue glutamate 99 is the Proton acceptor of the active site. Positions 105–330 constitute a Radical SAM core domain; it reads RFDGHTACIS…PVVVRDTQGR (226 aa). Cysteine 112 and cysteine 336 are disulfide-bonded. [4Fe-4S] cluster is bound by residues cysteine 119, cysteine 123, and cysteine 126. S-adenosyl-L-methionine contacts are provided by residues 162 to 163, serine 194, 217 to 219, and asparagine 293; these read GE and SLH. The active-site S-methylcysteine intermediate is the cysteine 336.

The protein belongs to the radical SAM superfamily. RlmN family. The cofactor is [4Fe-4S] cluster.

It localises to the cytoplasm. This Rhodopseudomonas palustris (strain BisB5) protein is Probable RNA methyltransferase RPD_2859.